We begin with the raw amino-acid sequence, 202 residues long: Ras-related protein Rab-18 (202 aa).

Residues Ser20, Gly23, Lys24, Ser25, Ser26, Asp37, Pro38, Thr43, Gly69, Lys126, Asp128, and Ala155 each contribute to the GTP site. Positions 40-48 match the Effector region motif; that stretch reads QAATIGVDF. The disordered stretch occupies residues 183–202; that stretch reads RPTFRLGQPTDTSSGNLCGC. A compositionally biased stretch (polar residues) spans 191–202; sequence PTDTSSGNLCGC. 2 S-geranylgeranyl cysteine lipidation sites follow: Cys200 and Cys202. At Cys202 the chain carries Cysteine methyl ester.

It belongs to the small GTPase superfamily. Rab family.

It catalyses the reaction GTP + H2O = GDP + phosphate + H(+). In terms of biological role, the small GTPases Rab are key regulators of intracellular membrane trafficking, from the formation of transport vesicles to their fusion with membranes. Rabs cycle between an inactive GDP-bound form and an active GTP-bound form that is able to recruit to membranes different sets of downstream effectors directly responsible for vesicle formation, movement, tethering and fusion. Plays a role in apical endocytosis/recycling. May be implicated in transport between the plasma membrane and early endosomes. The chain is Ras-related protein Rab-18 (rab-18) from Caenorhabditis briggsae.